We begin with the raw amino-acid sequence, 71 residues long: R-phycoerythrin gamma-1 chain, chloroplastic (71 aa).

Positions 25 and 34 each coordinate phycourobilin. Cys49 is a binding site for (2R,3E)-phycoerythrobilin. Position 58 (Cys58) interacts with phycourobilin.

As to quaternary structure, heteromer of 6 alpha, 6 beta and 1 gamma chains. In terms of processing, contains four covalently linked bilin chromophores.

It localises to the plastid. The protein localises to the chloroplast thylakoid membrane. Its function is as follows. Critical for the incorporation of phycoerythrin in the phycobilisome complex. This chain is R-phycoerythrin gamma-1 chain, chloroplastic, found in Gastroclonium coulteri (Red alga).